The primary structure comprises 320 residues: 3-oxoacyl-[acyl-carrier-protein] reductase 1, chloroplastic (320 aa).

The N-terminal 60 residues, 1-60 (MATTVAATKLTSLKAVKKLGFREIRQVRQWSPLQSAMPHFGMLRCGSRQSFATSTVVKAQ), are a transit peptide targeting the chloroplast. 82–106 (VTGASRGIGKAIALSLGKAGCKVLV) serves as a coordination point for NADP(+). Serine 214 is a binding site for substrate. Residue tyrosine 227 is the Proton acceptor of the active site.

The protein belongs to the short-chain dehydrogenases/reductases (SDR) family. Homotetramer.

The protein localises to the plastid. The protein resides in the chloroplast. The enzyme catalyses a (3R)-hydroxyacyl-[ACP] + NADP(+) = a 3-oxoacyl-[ACP] + NADPH + H(+). Its pathway is lipid metabolism; fatty acid biosynthesis. The sequence is that of 3-oxoacyl-[acyl-carrier-protein] reductase 1, chloroplastic (gbkr1) from Brassica napus (Rape).